A 188-amino-acid chain; its full sequence is MTKFLGPIAGFGVTFSTMFKKANTEFYPEEKTPTAPRYHGRHQLNRYADGLEKCIGCELCAWACPADAIFVEGADNTDEERYSPGERYGRVYQINYLRCIGCGLCIEACPTRALTMTNEYEMADDNRAGLIYEKDRLLAPLESGMVDSPHPMAPGTTAEDYYRGTVTGGAAPASQDEPEADDTAGDRP.

2 4Fe-4S ferredoxin-type domains span residues 44–74 and 90–119; these read LNRY…VEGA and RVYQ…MTNE. Positions 54, 57, 60, 64, 99, 102, 105, and 109 each coordinate [4Fe-4S] cluster. Residues 144–188 are disordered; it reads GMVDSPHPMAPGTTAEDYYRGTVTGGAAPASQDEPEADDTAGDRP. Acidic residues predominate over residues 176 to 188; sequence DEPEADDTAGDRP.

This sequence belongs to the complex I 23 kDa subunit family. NDH-1 is composed of 14 different subunits. Subunits NuoA, H, J, K, L, M, N constitute the membrane sector of the complex. [4Fe-4S] cluster is required as a cofactor.

The protein localises to the cell membrane. It catalyses the reaction a quinone + NADH + 5 H(+)(in) = a quinol + NAD(+) + 4 H(+)(out). NDH-1 shuttles electrons from NADH, via FMN and iron-sulfur (Fe-S) centers, to quinones in the respiratory chain. The immediate electron acceptor for the enzyme in this species is believed to be ubiquinone. Couples the redox reaction to proton translocation (for every two electrons transferred, four hydrogen ions are translocated across the cytoplasmic membrane), and thus conserves the redox energy in a proton gradient. The polypeptide is NADH-quinone oxidoreductase subunit I (Rhodococcus opacus (strain B4)).